A 164-amino-acid polypeptide reads, in one-letter code: Large ribosomal subunit protein bL9 (164 aa).

This sequence belongs to the bacterial ribosomal protein bL9 family.

Binds to the 23S rRNA. The sequence is that of Large ribosomal subunit protein bL9 from Borrelia recurrentis (strain A1).